The chain runs to 316 residues: Ribosomal RNA large subunit methyltransferase F (316 aa).

The protein belongs to the methyltransferase superfamily. METTL16/RlmF family.

It is found in the cytoplasm. The catalysed reaction is adenosine(1618) in 23S rRNA + S-adenosyl-L-methionine = N(6)-methyladenosine(1618) in 23S rRNA + S-adenosyl-L-homocysteine + H(+). Functionally, specifically methylates the adenine in position 1618 of 23S rRNA. The protein is Ribosomal RNA large subunit methyltransferase F of Pseudomonas putida (strain GB-1).